The sequence spans 953 residues: Translation initiation factor IF-2 (953 aa).

Positions 53–368 (AKKAVAGTSE…PVTERKFHEL (316 aa)) are disordered. Basic and acidic residues-rich tracts occupy residues 135–151 (FKAEREARAKEQAERRK) and 162–190 (RNDRNDRRNNQNDRNDRNSQNRNDRRNRQ). Over residues 191–214 (EQGNQHRNQGQSQYNQQRQSFNQG) the composition is skewed to low complexity. Residues 236–266 (RSSEERFKQAKANKEALREQNKRKEQAKLED) are compositionally biased toward basic and acidic residues. Residues 274–288 (PKPTAKAPATPAPTA) show a composition bias toward low complexity. Positions 301-318 (ARPDKERDNFDHEEDGPR) are enriched in basic and acidic residues. The segment covering 332–341 (NQKNSNWNNN) has biased composition (low complexity). The tr-type G domain occupies 455-622 (ERPPVVTIMG…TVLLVAEIQE (168 aa)). A G1 region spans residues 464 to 471 (GHVDHGKT). Residue 464 to 471 (GHVDHGKT) participates in GTP binding. A G2 region spans residues 489–493 (GITQH). Residues 510 to 513 (DTPG) form a G3 region. GTP is bound by residues 510–514 (DTPGH) and 564–567 (NKID). The G4 stretch occupies residues 564 to 567 (NKID). Residues 600 to 602 (SAK) are G5.

It belongs to the TRAFAC class translation factor GTPase superfamily. Classic translation factor GTPase family. IF-2 subfamily.

It localises to the cytoplasm. Its function is as follows. One of the essential components for the initiation of protein synthesis. Protects formylmethionyl-tRNA from spontaneous hydrolysis and promotes its binding to the 30S ribosomal subunits. Also involved in the hydrolysis of GTP during the formation of the 70S ribosomal complex. The polypeptide is Translation initiation factor IF-2 (Streptococcus gordonii (strain Challis / ATCC 35105 / BCRC 15272 / CH1 / DL1 / V288)).